The sequence spans 273 residues: Dermonecrotic toxin LapSicTox-alphaIB1bi (273 aa).

H5 is a catalytic residue. E25 and D27 together coordinate Mg(2+). Residue H41 is the Nucleophile of the active site. 2 disulfides stabilise this stretch: C45/C51 and C47/C190. D85 contributes to the Mg(2+) binding site. 2 N-linked (GlcNAc...) asparagine glycosylation sites follow: N189 and N250.

This sequence belongs to the arthropod phospholipase D family. Class II subfamily. It depends on Mg(2+) as a cofactor. As to expression, expressed by the venom gland.

Its subcellular location is the secreted. It carries out the reaction an N-(acyl)-sphingosylphosphocholine = an N-(acyl)-sphingosyl-1,3-cyclic phosphate + choline. It catalyses the reaction an N-(acyl)-sphingosylphosphoethanolamine = an N-(acyl)-sphingosyl-1,3-cyclic phosphate + ethanolamine. The enzyme catalyses a 1-acyl-sn-glycero-3-phosphocholine = a 1-acyl-sn-glycero-2,3-cyclic phosphate + choline. The catalysed reaction is a 1-acyl-sn-glycero-3-phosphoethanolamine = a 1-acyl-sn-glycero-2,3-cyclic phosphate + ethanolamine. Dermonecrotic toxins cleave the phosphodiester linkage between the phosphate and headgroup of certain phospholipids (sphingolipid and lysolipid substrates), forming an alcohol (often choline) and a cyclic phosphate. This toxin acts on sphingomyelin (SM). It may also act on ceramide phosphoethanolamine (CPE), lysophosphatidylcholine (LPC) and lysophosphatidylethanolamine (LPE), but not on lysophosphatidylserine (LPS), and lysophosphatidylglycerol (LPG). It acts by transphosphatidylation, releasing exclusively cyclic phosphate products as second products. Induces dermonecrosis, hemolysis, increased vascular permeability, edema, inflammatory response, and platelet aggregation. In Loxosceles apachea (Apache recluse spider), this protein is Dermonecrotic toxin LapSicTox-alphaIB1bi.